A 338-amino-acid polypeptide reads, in one-letter code: Ketol-acid reductoisomerase (NADP(+)) (338 aa).

Positions 1–181 (MKVFYDKDCD…GGGRTGIIET (181 aa)) constitute a KARI N-terminal Rossmann domain. Residues 24–27 (YGSQ), arginine 47, serine 50, threonine 52, and 82–85 (DEFQ) each bind NADP(+). The active site involves histidine 107. Glycine 133 is a binding site for NADP(+). A KARI C-terminal knotted domain is found at 182 to 327 (TFKDETETDL…EQLRSMMPWI (146 aa)). Mg(2+) is bound by residues aspartate 190, glutamate 194, glutamate 226, and glutamate 230. Serine 251 contributes to the substrate binding site.

This sequence belongs to the ketol-acid reductoisomerase family. The cofactor is Mg(2+).

The catalysed reaction is (2R)-2,3-dihydroxy-3-methylbutanoate + NADP(+) = (2S)-2-acetolactate + NADPH + H(+). It carries out the reaction (2R,3R)-2,3-dihydroxy-3-methylpentanoate + NADP(+) = (S)-2-ethyl-2-hydroxy-3-oxobutanoate + NADPH + H(+). The protein operates within amino-acid biosynthesis; L-isoleucine biosynthesis; L-isoleucine from 2-oxobutanoate: step 2/4. It functions in the pathway amino-acid biosynthesis; L-valine biosynthesis; L-valine from pyruvate: step 2/4. Its function is as follows. Involved in the biosynthesis of branched-chain amino acids (BCAA). Catalyzes an alkyl-migration followed by a ketol-acid reduction of (S)-2-acetolactate (S2AL) to yield (R)-2,3-dihydroxy-isovalerate. In the isomerase reaction, S2AL is rearranged via a Mg-dependent methyl migration to produce 3-hydroxy-3-methyl-2-ketobutyrate (HMKB). In the reductase reaction, this 2-ketoacid undergoes a metal-dependent reduction by NADPH to yield (R)-2,3-dihydroxy-isovalerate. This Pseudomonas putida (strain W619) protein is Ketol-acid reductoisomerase (NADP(+)).